The primary structure comprises 407 residues: Mitochondrial protein import protein mas5 (407 aa).

The J domain maps to 6-68 (KLYEVLNVDV…EKRATYDRFG (63 aa)). Substrate contacts are provided by residues leucine 110 and 129–131 (LAL). The segment at 124 to 207 (GKTTKLALQK…CDGAKVISQR (84 aa)) adopts a CR-type zinc-finger fold. Zn(2+) is bound by residues cysteine 137, cysteine 140, cysteine 153, cysteine 156, cysteine 179, cysteine 182, cysteine 195, and cysteine 198. CXXCXGXG motif repeat units lie at residues 137–144 (CPKCSGRG), 153–160 (CASCNGSG), 179–186 (CPDCNGAG), and 195–202 (CKECDGAK). Substrate-binding positions include 209 to 210 (IL) and 241 to 243 (VIF). The segment at 375 to 407 (VRIDNNVDPTTATSMDEDEDEEGGHPGVQCAQQ) is disordered. Cysteine methyl ester is present on cysteine 404. Cysteine 404 carries the S-farnesyl cysteine lipid modification. A propeptide spans 405–407 (AQQ) (removed in mature form).

Homodimer.

It localises to the cytoplasm. The protein resides in the nucleus. Probably involved in mitochondrial protein import. Plays a role in microtubule cytoskeleton organization. The protein is Mitochondrial protein import protein mas5 (mas5) of Schizosaccharomyces pombe (strain 972 / ATCC 24843) (Fission yeast).